Reading from the N-terminus, the 335-residue chain is Protein-arginine kinase (335 aa).

The region spanning 21–244 is the Phosphagen kinase C-terminal domain; that stretch reads VIISSRIRLA…NQIINEEKQI (224 aa). ATP contacts are provided by residues 24-28, histidine 82, arginine 115, 166-170, and 197-202; these read SSRIR, RASVM, and RGIYGE.

The protein belongs to the ATP:guanido phosphotransferase family.

The catalysed reaction is L-arginyl-[protein] + ATP = N(omega)-phospho-L-arginyl-[protein] + ADP + H(+). In terms of biological role, catalyzes the specific phosphorylation of arginine residues in proteins. In Staphylococcus epidermidis (strain ATCC 12228 / FDA PCI 1200), this protein is Protein-arginine kinase.